We begin with the raw amino-acid sequence, 278 residues long: Ubiquinone biosynthesis protein COQ4, mitochondrial (278 aa).

The transit peptide at 1 to 28 directs the protein to the mitochondrion; it reads MATPTSVRIAGFRSLQALCAQRTVTRNF. The Zn(2+) site is built by H164, D165, H168, and E180.

Belongs to the COQ4 family. Component of a multi-subunit COQ enzyme complex, composed of at least COQ3, COQ4, COQ5, COQ6, COQ7 and COQ9. It depends on Zn(2+) as a cofactor.

The protein resides in the mitochondrion inner membrane. It catalyses the reaction a 4-hydroxy-3-methoxy-5-(all-trans-polyprenyl)benzoate + H(+) = a 2-methoxy-6-(all-trans-polyprenyl)phenol + CO2. It participates in cofactor biosynthesis; ubiquinone biosynthesis. Lyase that catalyzes the C1-decarboxylation of 4-hydroxy-3-methoxy-5-(all-trans-polyprenyl)benzoic acid into 2-methoxy-6-(all-trans-polyprenyl)phenol during ubiquinone biosynthesis. This Uncinocarpus reesii (strain UAMH 1704) protein is Ubiquinone biosynthesis protein COQ4, mitochondrial.